We begin with the raw amino-acid sequence, 657 residues long: MEMETTEPEPDCVVQPPSPPDDFSCQMRLSEKITPLKTCFKKKDQKRLGTGTLRSLRPILNTLLESGSLDGVFRSRNQSTDENSLHEPMMKKAMEINSSCPPAENNMSVLIPDRTNVGDQIPEAHPSTEAPERVVPIQDHSFPSETLSGTVADSTPAHFQTDLLHPVSSDVPTSPDCLDKVIDYVPGIFQENSFTIQYILDTSDKLSTELFQDKSEEASLDLVFELVNQLQYHTHQENGIEICMDFLQGTCIYGRDCLKHHTVLPYHWQIKRTTTQKWQSVFNDSQEHLERFYCNPENDRMRMKYGGQEFWADLNAMNVYETTEFDQLRRLSTPPSSNVNSIYHTVWKFFCRDHFGWREYPESVIRLIEEANSRGLKEVRFMMWNNHYILHNSFFRREIKRRPLFRSCFILLPYLQTLGGVPTQAPPPLEATSSSQIICPDGVTSANFYPETWVYMHPSQDFIQVPVSAEDKSYRIIYNLFHKTVPEFKYRILQILRVQNQFLWEKYKRKKEYMNRKMFGRDRIINERHLFHGTSQDVVDGICKHNFDPRVCGKHATMFGQGSYFAKKASYSHNFSKKSSKGVHFMFLAKVLTGRYTMGSHGMRRPPPVNPGSVTSDLYDSCVDNFFEPQIFVIFNDDQSYPYFVIQYEEVSNTVSI.

A compositionally biased stretch (acidic residues) spans 1-10; that stretch reads MEMETTEPEP. Positions 1–21 are disordered; it reads MEMETTEPEPDCVVQPPSPPD. ADP-ribosylcysteine is present on Cys39. The Nuclear localization signal signature appears at 41-47; it reads KKKDQKR. The segment at 237-264 adopts a C3H1-type zinc-finger fold; the sequence is ENGIEICMDFLQGTCIYGRDCLKHHTVL. The region spanning 332-410 is the WWE domain; it reads STPPSSNVNS…RRPLFRSCFI (79 aa). Residues 449–657 form the PARP catalytic domain; sequence YPETWVYMHP…YEEVSNTVSI (209 aa).

It belongs to the ARTD/PARP family. In terms of assembly, interacts with AHR. Auto-mono-ADP-ribosylated.

Its subcellular location is the nucleus. It catalyses the reaction L-aspartyl-[protein] + NAD(+) = 4-O-(ADP-D-ribosyl)-L-aspartyl-[protein] + nicotinamide. It carries out the reaction L-glutamyl-[protein] + NAD(+) = 5-O-(ADP-D-ribosyl)-L-glutamyl-[protein] + nicotinamide. The catalysed reaction is L-cysteinyl-[protein] + NAD(+) = S-(ADP-D-ribosyl)-L-cysteinyl-[protein] + nicotinamide + H(+). With respect to regulation, ADP-ribosyltransferase activity is inhibited by PJ34; inhibition is however not specific to TIPARP and other PARP-domain containing proteins are also inhibited by PJ34. Partially inhibited by KU0058948. Its function is as follows. ADP-ribosyltransferase that mediates mono-ADP-ribosylation of glutamate, aspartate and cysteine residues on target proteins. Acts as a negative regulator of AHR by mediating mono-ADP-ribosylation of AHR, leading to inhibit transcription activator activity of AHR. The polypeptide is Protein mono-ADP-ribosyltransferase TIPARP (Homo sapiens (Human)).